Consider the following 49-residue polypeptide: Defensin-like protein 1 (49 aa).

Intrachain disulfides connect C3-C49, C14-C35, C20-C43, and C24-C45.

It belongs to the DEFL family.

It localises to the secreted. Possesses antimicrobial activity sensitive to inorganic cations. Binds specifically to the fungal plasma membrane. Has no inhibitory effect on insect gut alpha-amylase. The protein is Defensin-like protein 1 of Clitoria ternatea (Butterfly pea).